Reading from the N-terminus, the 129-residue chain is Selenoprotein M (129 aa).

The N-terminal stretch at methionine 1–alanine 19 is a signal peptide. Active-site nucleophile residues include cysteine 35 and selenocysteine 38. Selenocysteine 38 is a non-standard amino acid (selenocysteine). The tract at residues lysine 107–leucine 129 is disordered. Positions lysine 126–leucine 129 match the Prevents secretion from ER motif.

This sequence belongs to the selenoprotein M/F family. High expression levels observed in hepatopancreas, testis, ovaries and intestine. Also expressed in heart, stomach, gills, cranial ganglia, muscle and hematocytes.

The protein localises to the endoplasmic reticulum. In terms of biological role, may function as a thiol-disulfide oxidoreductase that participates in disulfide bond formation. Involved in the regulation of reproduction during the period of rapid gonadal development. The chain is Selenoprotein M from Eriocheir sinensis (Chinese mitten crab).